Here is an 810-residue protein sequence, read N- to C-terminus: Phenylalanine--tRNA ligase beta subunit (810 aa).

The tRNA-binding domain occupies 39 to 154 (APPTEKIVVG…EGTPVGQDIR (116 aa)). One can recognise a B5 domain in the interval 405–480 (PQRAPVSMRA…RIYGFEKIPA (76 aa)). D458, D464, E467, and E468 together coordinate Mg(2+). Residues 707–809 (SKFPPVRRDI…MARVYGARLR (103 aa)) form the FDX-ACB domain.

The protein belongs to the phenylalanyl-tRNA synthetase beta subunit family. Type 1 subfamily. In terms of assembly, tetramer of two alpha and two beta subunits. The cofactor is Mg(2+).

The protein localises to the cytoplasm. It catalyses the reaction tRNA(Phe) + L-phenylalanine + ATP = L-phenylalanyl-tRNA(Phe) + AMP + diphosphate + H(+). The polypeptide is Phenylalanine--tRNA ligase beta subunit (Burkholderia pseudomallei (strain 1710b)).